An 89-amino-acid polypeptide reads, in one-letter code: Small ribosomal subunit protein uS15 (89 aa).

This sequence belongs to the universal ribosomal protein uS15 family. As to quaternary structure, part of the 30S ribosomal subunit. Forms a bridge to the 50S subunit in the 70S ribosome, contacting the 23S rRNA.

Functionally, one of the primary rRNA binding proteins, it binds directly to 16S rRNA where it helps nucleate assembly of the platform of the 30S subunit by binding and bridging several RNA helices of the 16S rRNA. In terms of biological role, forms an intersubunit bridge (bridge B4) with the 23S rRNA of the 50S subunit in the ribosome. The polypeptide is Small ribosomal subunit protein uS15 (Pseudomonas fluorescens (strain SBW25)).